Here is a 311-residue protein sequence, read N- to C-terminus: Ribosomal RNA small subunit methyltransferase H (311 aa).

S-adenosyl-L-methionine is bound by residues 32-34 (AGH), D52, F79, D100, and Q107.

It belongs to the methyltransferase superfamily. RsmH family.

Its subcellular location is the cytoplasm. It catalyses the reaction cytidine(1402) in 16S rRNA + S-adenosyl-L-methionine = N(4)-methylcytidine(1402) in 16S rRNA + S-adenosyl-L-homocysteine + H(+). Specifically methylates the N4 position of cytidine in position 1402 (C1402) of 16S rRNA. In Staphylococcus aureus (strain Mu3 / ATCC 700698), this protein is Ribosomal RNA small subunit methyltransferase H.